The primary structure comprises 432 residues: UDP-N-acetylmuramoylalanine--D-glutamate ligase (432 aa).

An ATP-binding site is contributed by 98 to 104 (GTNGKST).

The protein belongs to the MurCDEF family.

It is found in the cytoplasm. The enzyme catalyses UDP-N-acetyl-alpha-D-muramoyl-L-alanine + D-glutamate + ATP = UDP-N-acetyl-alpha-D-muramoyl-L-alanyl-D-glutamate + ADP + phosphate + H(+). It functions in the pathway cell wall biogenesis; peptidoglycan biosynthesis. In terms of biological role, cell wall formation. Catalyzes the addition of glutamate to the nucleotide precursor UDP-N-acetylmuramoyl-L-alanine (UMA). This chain is UDP-N-acetylmuramoylalanine--D-glutamate ligase, found in Fusobacterium nucleatum subsp. nucleatum (strain ATCC 25586 / DSM 15643 / BCRC 10681 / CIP 101130 / JCM 8532 / KCTC 2640 / LMG 13131 / VPI 4355).